A 213-amino-acid chain; its full sequence is BAG family molecular chaperone regulator 6, mitochondrial (213 aa).

Positions 53-82 (DDAAAARIQAAFRGHLVRRHAAAVRGADDE) constitute an IQ domain. Positions 75–152 (AVRGADDEAT…GLQEVFDAVL (78 aa)) constitute a BAG domain.

Interacts with CAM1-1 under normal conditions. Dissociation of the interaction when calcium-CAM1-1 binding increases under saline-alkaline stress.

The protein resides in the mitochondrion. Functionally, co-chaperone that regulates stress responses. Acts as a negative regulator of saline-alkaline stress tolerance. May participate in stress response through regulating the homeostasis of iron, manganese and zinc ions. The chain is BAG family molecular chaperone regulator 6, mitochondrial from Oryza sativa subsp. japonica (Rice).